The sequence spans 261 residues: 5'-nucleotidase SurE (261 aa).

Asp-8, Asp-9, Ser-43, and Asn-96 together coordinate a divalent metal cation.

It belongs to the SurE nucleotidase family. A divalent metal cation is required as a cofactor.

Its subcellular location is the cytoplasm. The catalysed reaction is a ribonucleoside 5'-phosphate + H2O = a ribonucleoside + phosphate. Its function is as follows. Nucleotidase that shows phosphatase activity on nucleoside 5'-monophosphates. This is 5'-nucleotidase SurE from Cereibacter sphaeroides (strain ATCC 17023 / DSM 158 / JCM 6121 / CCUG 31486 / LMG 2827 / NBRC 12203 / NCIMB 8253 / ATH 2.4.1.) (Rhodobacter sphaeroides).